The primary structure comprises 226 residues: MKAIKIAIDGPASSGKSTVAKIIAKNLGYTYLDTGAMYRSATYIALTHGYTGKEVALILEELEKNPIFFKKAKDGSQLVFLGDEDVTLAIRQNDVTNNVSWISALPEIREELVHQQRRIAQAGGIIMDGRDIGTVVLPDAELKIFLVASVEERAERRYKENLEKGIESDFETLKEEIAARDYKDSHRKVSPLKAAEDALIFDTTGVSIDGVVQFIQEKAEKIVDMS.

10 to 18 (GPASSGKST) lines the ATP pocket.

It belongs to the cytidylate kinase family. Type 1 subfamily.

The protein resides in the cytoplasm. It carries out the reaction CMP + ATP = CDP + ADP. The catalysed reaction is dCMP + ATP = dCDP + ADP. This is Cytidylate kinase from Streptococcus pyogenes serotype M1.